A 1196-amino-acid chain; its full sequence is FIP1[V]-like protein (1196 aa).

Disordered stretches follow at residues 1–102 (MEED…TIPG), 117–248 (GVSQ…SHGY), 268–300 (GAAS…WRPL), 413–472 (GAQG…PRMR), and 485–1174 (SHED…IEGP). The segment covering 18 to 31 (FQPPVVLPPPPPLP) has biased composition (pro residues). Polar residues predominate over residues 117–126 (GVSQVTTRIE). Over residues 129-141 (VGGGGDGGYGGQG) the composition is skewed to gly residues. Composition is skewed to acidic residues over residues 142 to 154 (EGDD…EDDL) and 179 to 190 (NEDDDDEDDEDP). Residues 226–236 (AGKGSGPGGAT) show a composition bias toward gly residues. Residues 268–278 (GAASVGGPSSG) are compositionally biased toward low complexity. A compositionally biased stretch (basic and acidic residues) spans 518–548 (KRPDTESAEHSPAQDEPHKNLLKKQDDEISR). Polar residues predominate over residues 549–561 (STDSGQSFRSSSP). Composition is skewed to basic and acidic residues over residues 565-592 (RGTR…EELK) and 608-641 (GESK…DKHS). Residues 643–657 (RPANNRKQYDNNAPH) show a composition bias toward polar residues. 5 stretches are compositionally biased toward basic and acidic residues: residues 661-673 (KNQD…ERTR), 699-802 (SRED…EKNE), 810-918 (SMSR…DTLR), 925-945 (RRDY…DFSA), and 953-971 (NEKK…KFID). 2 consecutive short sequence motifs (nuclear localization signal) follow at residues 704-711 (DKRKERDV) and 734-741 (RKRDREDD). Over residues 998-1021 (ESLSKQGEQNGSSVVTGSKGTNDA) the composition is skewed to polar residues. 3 stretches are compositionally biased toward basic and acidic residues: residues 1046–1071 (DEIH…EDAV), 1103–1137 (KSRD…TVEK), and 1151–1163 (TEKD…KMES).

This sequence belongs to the FIP1 family. Component of the cleavage and polyadenylation specificity factor (CPSF) complex. Forms a complex with cleavage and polyadenylation specificity factor (CPSF) subunits CFIS1, CFIS2, CPSF30, CSTF50, CSTF64, CSTF77, FIPS3, PABN1, PABN2, PABN3, PAPS4, CFIM25 and PABN1. Binds RNA. As to expression, expressed in leaves, stems, flower tissues and roots.

It localises to the nucleus. Essential gene. Component of the cleavage and polyadenylation specificity factor (CPSF) complex that plays a key role in pre-mRNA 3'-end formation, recognizing the AAUAAA signal sequence and interacting with poly(A) polymerase and other factors to bring about cleavage and poly(A) addition. FIP1L1 contributes to poly(A) site recognition and stimulates poly(A) addition. Binds to U-rich RNA sequence elements surrounding the poly(A) site. May act to tether poly(A) polymerase to the CPSF complex. The protein is FIP1[V]-like protein of Arabidopsis thaliana (Mouse-ear cress).